The sequence spans 322 residues: Biotin synthase (322 aa).

Residues 39 to 266 enclose the Radical SAM core domain; the sequence is NQIQVSSLLN…KSVVRLSAGR (228 aa). Residues cysteine 54, cysteine 58, and cysteine 61 each contribute to the [4Fe-4S] cluster site. 4 residues coordinate [2Fe-2S] cluster: cysteine 98, cysteine 129, cysteine 189, and arginine 261.

The protein belongs to the radical SAM superfamily. Biotin synthase family. Homodimer. The cofactor is [4Fe-4S] cluster. Requires [2Fe-2S] cluster as cofactor.

It carries out the reaction (4R,5S)-dethiobiotin + (sulfur carrier)-SH + 2 reduced [2Fe-2S]-[ferredoxin] + 2 S-adenosyl-L-methionine = (sulfur carrier)-H + biotin + 2 5'-deoxyadenosine + 2 L-methionine + 2 oxidized [2Fe-2S]-[ferredoxin]. It functions in the pathway cofactor biosynthesis; biotin biosynthesis; biotin from 7,8-diaminononanoate: step 2/2. Catalyzes the conversion of dethiobiotin (DTB) to biotin by the insertion of a sulfur atom into dethiobiotin via a radical-based mechanism. The sequence is that of Biotin synthase from Ruthia magnifica subsp. Calyptogena magnifica.